Consider the following 236-residue polypeptide: 2-C-methyl-D-erythritol 4-phosphate cytidylyltransferase (236 aa).

It belongs to the IspD/TarI cytidylyltransferase family. IspD subfamily.

It catalyses the reaction 2-C-methyl-D-erythritol 4-phosphate + CTP + H(+) = 4-CDP-2-C-methyl-D-erythritol + diphosphate. It participates in isoprenoid biosynthesis; isopentenyl diphosphate biosynthesis via DXP pathway; isopentenyl diphosphate from 1-deoxy-D-xylulose 5-phosphate: step 2/6. Its function is as follows. Catalyzes the formation of 4-diphosphocytidyl-2-C-methyl-D-erythritol from CTP and 2-C-methyl-D-erythritol 4-phosphate (MEP). In Alkaliphilus oremlandii (strain OhILAs) (Clostridium oremlandii (strain OhILAs)), this protein is 2-C-methyl-D-erythritol 4-phosphate cytidylyltransferase.